The primary structure comprises 397 residues: tRNA-specific 2-thiouridylase MnmA (397 aa).

ATP contacts are provided by residues 19 to 26 and leucine 45; that span reads AMSGGVDS. Catalysis depends on cysteine 113, which acts as the Nucleophile. A disulfide bridge connects residues cysteine 113 and cysteine 210. ATP is bound at residue glycine 137. An interaction with tRNA region spans residues 160–162; sequence RDQ. Cysteine 210 acts as the Cysteine persulfide intermediate in catalysis.

Belongs to the MnmA/TRMU family.

It is found in the cytoplasm. It catalyses the reaction S-sulfanyl-L-cysteinyl-[protein] + uridine(34) in tRNA + AH2 + ATP = 2-thiouridine(34) in tRNA + L-cysteinyl-[protein] + A + AMP + diphosphate + H(+). In terms of biological role, catalyzes the 2-thiolation of uridine at the wobble position (U34) of tRNA, leading to the formation of s(2)U34. In Rhodopseudomonas palustris (strain ATCC BAA-98 / CGA009), this protein is tRNA-specific 2-thiouridylase MnmA.